A 244-amino-acid polypeptide reads, in one-letter code: U11/U12 small nuclear ribonucleoprotein 35 kDa protein (244 aa).

The 79-residue stretch at 51–129 (LTLFVARLNS…HEIFVDYELE (79 aa)) folds into the RRM domain. Over residues 146-162 (GKKESGQLRFGGRDRPF) the composition is skewed to basic and acidic residues. The interval 146–244 (GKKESGQLRF…KTRDKRDRSK (99 aa)) is disordered. Lysine 172 participates in a covalent cross-link: Glycyl lysine isopeptide (Lys-Gly) (interchain with G-Cter in SUMO2). Composition is skewed to basic and acidic residues over residues 173 to 185 (NEPHREGKRERRE) and 192 to 244 (RHWD…DRSK).

In terms of assembly, component of the U11/U12 snRNPs that are part of the U12-type spliceosome.

Its subcellular location is the nucleus. In Rattus norvegicus (Rat), this protein is U11/U12 small nuclear ribonucleoprotein 35 kDa protein (Snrnp35).